The sequence spans 317 residues: Melanocyte-stimulating hormone receptor (317 aa).

Topologically, residues 1-37 are extracellular; it reads MPVQGSQRRLLGSLNSTPTATPRLGLAANQTGARCLE. Asn-29 is a glycosylation site (N-linked (GlcNAc...) asparagine). A helical transmembrane segment spans residues 38-63; the sequence is VSIPDGLFLSLGLVSLVENVLVVVAI. The Cytoplasmic segment spans residues 64–72; the sequence is ARNRNLHSP. The helical transmembrane segment at 73 to 93 threads the bilayer; that stretch reads MYCFICCLALSDLLVSGSNML. At 94-118 the chain is on the extracellular side; it reads ETAVILLLEAGALAARAAVVQQLDN. Residues 119–140 form a helical membrane-spanning segment; sequence VIDVITCSSMLSSLCFLGAIAV. Residues 141 to 163 are Cytoplasmic-facing; that stretch reads DRYISIFYALRYHSIVTLRRARR. The chain crosses the membrane as a helical span at residues 164-183; sequence VVAAIWVASVLFSTLFIAYC. At 184–191 the chain is on the extracellular side; it reads DHAAVLLS. A helical membrane pass occupies residues 192–211; the sequence is LVVFFLAMLVLMAVLYVHML. Residues 212–240 are Cytoplasmic-facing; that stretch reads ARACQHAQGIAQLHKRQRPAHQGVGLKGA. The helical transmembrane segment at 241–266 threads the bilayer; sequence ATLTILLGIFFLCWGPFFLHLTLIVL. Topologically, residues 267-279 are extracellular; sequence CPQHPTCSCIFKN. The helical transmembrane segment at 280-300 threads the bilayer; the sequence is FNLFLTLIICNAIIDPLIYAF. Over 301 to 317 the chain is Cytoplasmic; the sequence is RSQELRRTLKKVLLCSW. Cys-315 carries the S-palmitoyl cysteine lipid modification.

This sequence belongs to the G-protein coupled receptor 1 family. Interacts with MGRN1, but does not undergo MGRN1-mediated ubiquitination; this interaction competes with GNAS-binding and thus inhibits agonist-induced cAMP production. Interacts with OPN3; the interaction results in a decrease in MC1R-mediated cAMP signaling and ultimately a decrease in melanin production in melanocytes.

The protein resides in the cell membrane. Functionally, receptor for MSH (alpha, beta and gamma) and ACTH. The activity of this receptor is mediated by G proteins which activate adenylate cyclase. Mediates melanogenesis, the production of eumelanin (black/brown) and phaeomelanin (red/yellow), via regulation of cAMP signaling in melanocytes. This is Melanocyte-stimulating hormone receptor (MC1R) from Trachypithecus auratus (Javan langur).